Reading from the N-terminus, the 317-residue chain is Apolipoprotein E (317 aa).

The signal sequence occupies residues 1–18; it reads MKVLWAALLVTFLAGCQA. 8 consecutive repeat copies span residues 80–101, 102–123, 124–145, 146–167, 168–189, 190–211, 212–233, and 234–255. The tract at residues 80–255 is 8 X 22 AA approximate tandem repeats; sequence TLMDETMKEL…RLDEVKEQVA (176 aa). Position 143 is a methionine sulfoxide (methionine 143). Serine 147 is subject to Phosphoserine. The tract at residues 158-168 is LDL and other lipoprotein receptors binding; sequence HLRKLRKRLLR. 162–165 lines the heparin pocket; sequence LRKR. The interval 210–290 is lipid-binding and lipoprotein association; that stretch reads AATVGSLAGQ…SWFEPLVEDM (81 aa). A heparin-binding site is contributed by 229–236; sequence GERLRARM. The tract at residues 266–317 is homooligomerization; that stretch reads QQISLQAEAFQARLKSWFEPLVEDMQRQWAGLVEKVQAAVGASTAPVPSDNH. The tract at residues 278–290 is specificity for association with VLDL; sequence RLKSWFEPLVEDM.

This sequence belongs to the apolipoprotein A1/A4/E family. Homotetramer. May interact with ABCA1; functionally associated with ABCA1 in the biogenesis of HDLs. May interact with APP/A4 amyloid-beta peptide; the interaction is extremely stable in vitro but its physiological significance is unclear. May interact with MAPT. May interact with MAP2. In the cerebrospinal fluid, interacts with secreted SORL1. Interacts with PMEL; this allows the loading of PMEL luminal fragment on ILVs to induce fibril nucleation. APOE exists as multiple glycosylated and sialylated glycoforms within cells and in plasma. The extent of glycosylation and sialylation are tissue and context specific. Post-translationally, glycated in plasma VLDL. In terms of processing, phosphorylated by FAM20C in the extracellular medium.

The protein resides in the secreted. The protein localises to the extracellular space. It localises to the extracellular matrix. It is found in the extracellular vesicle. Its subcellular location is the endosome. The protein resides in the multivesicular body. In terms of biological role, APOE is an apolipoprotein, a protein associating with lipid particles, that mainly functions in lipoprotein-mediated lipid transport between organs via the plasma and interstitial fluids. APOE is a core component of plasma lipoproteins and is involved in their production, conversion and clearance. Apolipoproteins are amphipathic molecules that interact both with lipids of the lipoprotein particle core and the aqueous environment of the plasma. As such, APOE associates with chylomicrons, chylomicron remnants, very low density lipoproteins (VLDL) and intermediate density lipoproteins (IDL) but shows a preferential binding to high-density lipoproteins (HDL). It also binds a wide range of cellular receptors including the LDL receptor/LDLR, the LDL receptor-related proteins LRP1, LRP2 and LRP8 and the very low-density lipoprotein receptor/VLDLR that mediate the cellular uptake of the APOE-containing lipoprotein particles. Finally, APOE also has a heparin-binding activity and binds heparan-sulfate proteoglycans on the surface of cells, a property that supports the capture and the receptor-mediated uptake of APOE-containing lipoproteins by cells. A main function of APOE is to mediate lipoprotein clearance through the uptake of chylomicrons, VLDLs, and HDLs by hepatocytes. APOE is also involved in the biosynthesis by the liver of VLDLs as well as their uptake by peripheral tissues ensuring the delivery of triglycerides and energy storage in muscle, heart and adipose tissues. By participating in the lipoprotein-mediated distribution of lipids among tissues, APOE plays a critical role in plasma and tissues lipid homeostasis. APOE is also involved in two steps of reverse cholesterol transport, the HDLs-mediated transport of cholesterol from peripheral tissues to the liver, and thereby plays an important role in cholesterol homeostasis. First, it is functionally associated with ABCA1 in the biogenesis of HDLs in tissues. Second, it is enriched in circulating HDLs and mediates their uptake by hepatocytes. APOE also plays an important role in lipid transport in the central nervous system, regulating neuron survival and sprouting. The polypeptide is Apolipoprotein E (APOE) (Colobus guereza (Mantled guereza)).